The following is a 550-amino-acid chain: Glypican-1 (550 aa).

Positions 1–20 are cleaved as a signal peptide; that stretch reads MRFFPWGFWLLCVASAPARG. Intrachain disulfides connect Cys29–Cys65, Cys59–Cys253, Cys66–Cys256, Cys188–Cys340, Cys243–Cys276, Cys265–Cys412, and Cys269–Cys398. N-linked (GlcNAc...) asparagine glycans are attached at residues Asn76 and Asn113. N-linked (GlcNAc...) asparagine glycosylation is present at Asn382. 2 disordered regions span residues 475–494 and 502–522; these read FQDASDDMSGSGSGDSCPDD and KSPSTRQPETHAIPKQSGHGV. Residues 481 to 494 show a composition bias toward low complexity; the sequence is DMSGSGSGDSCPDD. O-linked (Xyl...) (heparan sulfate) serine glycosylation is found at Ser483, Ser485, and Ser487. The GPI-anchor amidated glycine moiety is linked to residue Gly524. The propeptide at 525-550 is removed in mature form; that stretch reads ASSRSLPSAFLLFLSGASIVVQHLWR.

Belongs to the glypican family. In terms of processing, O-glycosylated with heparan sulfate.

It is found in the cell membrane. It localises to the endosome. The protein resides in the secreted. The protein localises to the extracellular space. Its function is as follows. Cell surface proteoglycan that bears heparan sulfate. Modulates Wnt-signaling pathway. The protein is Glypican-1 (GPC1) of Gallus gallus (Chicken).